The chain runs to 101 residues: Small ribosomal subunit protein uS14 (101 aa).

Belongs to the universal ribosomal protein uS14 family. In terms of assembly, part of the 30S ribosomal subunit. Contacts proteins S3 and S10.

Functionally, binds 16S rRNA, required for the assembly of 30S particles and may also be responsible for determining the conformation of the 16S rRNA at the A site. The protein is Small ribosomal subunit protein uS14 of Caulobacter sp. (strain K31).